A 307-amino-acid polypeptide reads, in one-letter code: MGDLPTTFDKPVHIAVIGGTGLGQLEGFEPIAALNPITPWGAPASPIQILSHKGVNVAFLARHGIHHQFAPHEVPNRANIAALRHIGVRCVIAFSAVGSLQEEIKPMDFVVPDQVIDRTKGVRPFTFFEGGVVGHVGFADPFDAGLAKVVKTCAEHMEGDGVVLHEKGTVIVMEGPQFSTRAESHMYRSWGGSVINMSTLPEAKLAREAEMAYQVIAMATDYDCWHSFEDVNVEMVGKYMKANSKNAKRLVGAVLDRLADLDNSDLVLAKHWQGASQGAVKFMTKPEGRDPEAMKRVEYLFPGFWEE.

Phosphate contacts are provided by residues T20, 62-63 (RH), and 95-96 (SA). Residue M197 participates in substrate binding. S198 contacts phosphate. 221–223 (DYD) lines the substrate pocket.

It belongs to the PNP/MTAP phosphorylase family. MTAP subfamily. Homotrimer.

It localises to the cytoplasm. The protein localises to the nucleus. It catalyses the reaction S-methyl-5'-thioadenosine + phosphate = 5-(methylsulfanyl)-alpha-D-ribose 1-phosphate + adenine. It functions in the pathway amino-acid biosynthesis; L-methionine biosynthesis via salvage pathway; S-methyl-5-thio-alpha-D-ribose 1-phosphate from S-methyl-5'-thioadenosine (phosphorylase route): step 1/1. In terms of biological role, catalyzes the reversible phosphorylation of S-methyl-5'-thioadenosine (MTA) to adenine and 5-methylthioribose-1-phosphate. Involved in the breakdown of MTA, a major by-product of polyamine biosynthesis. Responsible for the first step in the methionine salvage pathway after MTA has been generated from S-adenosylmethionine. Has broad substrate specificity with 6-aminopurine nucleosides as preferred substrates. The chain is S-methyl-5'-thioadenosine phosphorylase from Fusarium vanettenii (strain ATCC MYA-4622 / CBS 123669 / FGSC 9596 / NRRL 45880 / 77-13-4) (Fusarium solani subsp. pisi).